The chain runs to 457 residues: tRNA modification GTPase MnmE (457 aa).

(6S)-5-formyl-5,6,7,8-tetrahydrofolate-binding residues include Arg-22, Glu-86, and Arg-125. The TrmE-type G domain occupies 221–381; the sequence is GLRAVLAGRP…LEAEVARVAG (161 aa). Residue Asn-231 participates in K(+) binding. GTP is bound by residues 231–236, 250–256, and 275–278; these read NVGKSS, TPIPGTT, and DTAG. Residue Ser-235 participates in Mg(2+) binding. K(+)-binding residues include Thr-250, Ile-252, and Thr-255. Thr-256 contributes to the Mg(2+) binding site. Residue Lys-457 participates in (6S)-5-formyl-5,6,7,8-tetrahydrofolate binding.

It belongs to the TRAFAC class TrmE-Era-EngA-EngB-Septin-like GTPase superfamily. TrmE GTPase family. In terms of assembly, homodimer. Heterotetramer of two MnmE and two MnmG subunits. The cofactor is K(+).

Its subcellular location is the cytoplasm. Exhibits a very high intrinsic GTPase hydrolysis rate. Involved in the addition of a carboxymethylaminomethyl (cmnm) group at the wobble position (U34) of certain tRNAs, forming tRNA-cmnm(5)s(2)U34. The protein is tRNA modification GTPase MnmE of Symbiobacterium thermophilum (strain DSM 24528 / JCM 14929 / IAM 14863 / T).